The primary structure comprises 244 residues: Chalcone--flavanone isomerase (244 aa).

Positions 45, 110, and 187 each coordinate substrate.

Belongs to the chalcone isomerase family.

It carries out the reaction a chalcone = a flavanone.. It functions in the pathway secondary metabolite biosynthesis; flavonoid biosynthesis. Functionally, catalyzes the intramolecular cyclization of bicyclic chalcones into tricyclic (S)-flavanones. Responsible for the isomerization of 4,2',4',6'-tetrahydroxychalcone (also termed chalcone) into naringenin. This chain is Chalcone--flavanone isomerase (CHI), found in Nicotiana tabacum (Common tobacco).